A 410-amino-acid polypeptide reads, in one-letter code: uncharacterized protein (410 aa).

Over residues 178–187 the composition is skewed to polar residues; it reads QKNHRNQLST. Disordered regions lie at residues 178–203 and 236–272; these read QKNH…QEHQ and RAEQ…PTVQ. Positions 188–198 are enriched in low complexity; the sequence is QKKQQQALQKA. Residues 236–263 show a composition bias toward basic and acidic residues; it reads RAEQAAREQEKREREALAQRQKAEEKRT.

This is an uncharacterized protein from Haemophilus influenzae (strain ATCC 51907 / DSM 11121 / KW20 / Rd).